Reading from the N-terminus, the 266-residue chain is Aquaporin TIP3-2 (266 aa).

2 helical membrane passes run 29-49 (AAISEFIATAIFVFAAEGSVL) and 66-86 (GLVAVALAHALGLAVAVAVAV). Positions 94–96 (NPA) match the NPA 1 motif. Helical transmembrane passes span 109 to 129 (LVRAVLYWAAQLLGAVAATLL), 153 to 173 (AVLLEAVMTFGFVYAYYATVV), and 180 to 200 (LGTIAPLAVGFLLGANVLAGG). The short motif at 208-210 (NPA) is the NPA 2 element. A helical transmembrane segment spans residues 228 to 248 (YWLGPFLGAGLAGLVYEYLLI).

The protein belongs to the MIP/aquaporin (TC 1.A.8) family. TIP (TC 1.A.8.10) subfamily.

It is found in the vacuole membrane. Aquaporins facilitate the transport of water and small neutral solutes across cell membranes. The chain is Aquaporin TIP3-2 (TIP3-2) from Zea mays (Maize).